Here is a 272-residue protein sequence, read N- to C-terminus: ATP phosphoribosyltransferase regulatory subunit (272 aa).

Belongs to the class-II aminoacyl-tRNA synthetase family. HisZ subfamily. As to quaternary structure, heteromultimer composed of HisG and HisZ subunits.

It is found in the cytoplasm. Its pathway is amino-acid biosynthesis; L-histidine biosynthesis; L-histidine from 5-phospho-alpha-D-ribose 1-diphosphate: step 1/9. Its function is as follows. Required for the first step of histidine biosynthesis. May allow the feedback regulation of ATP phosphoribosyltransferase activity by histidine. The polypeptide is ATP phosphoribosyltransferase regulatory subunit (Staphylococcus aureus (strain bovine RF122 / ET3-1)).